The sequence spans 485 residues: GlcNAc-binding protein A (485 aa).

A signal peptide spans 1–23; that stretch reads MKKQPKMTAIALILSGISGLAYG. The 178-residue stretch at 24-201 folds into the Chitin-binding type-4 domain; sequence HGYVSAVENG…SFYNVIDVKF (178 aa). One can recognise a Chitin-binding type-3 domain in the interval 437-478; the sequence is AGTKVLASDGAIYQCKPWPYSGYCQQWTSNATQYQPGTGSHW.

The protein belongs to the GbpA family.

The protein resides in the secreted. Its function is as follows. Probably interacts with GlcNAc residues. May promote attachment to both epithelial cell surfaces and chitin. This chain is GlcNAc-binding protein A, found in Vibrio cholerae serotype O1 (strain ATCC 39541 / Classical Ogawa 395 / O395).